The chain runs to 1381 residues: DNA-directed RNA polymerase subunit beta (1381 aa).

This sequence belongs to the RNA polymerase beta chain family. In terms of assembly, the RNAP catalytic core consists of 2 alpha, 1 beta, 1 beta' and 1 omega subunit. When a sigma factor is associated with the core the holoenzyme is formed, which can initiate transcription.

It carries out the reaction RNA(n) + a ribonucleoside 5'-triphosphate = RNA(n+1) + diphosphate. Functionally, DNA-dependent RNA polymerase catalyzes the transcription of DNA into RNA using the four ribonucleoside triphosphates as substrates. The protein is DNA-directed RNA polymerase subunit beta of Halorhodospira halophila (strain DSM 244 / SL1) (Ectothiorhodospira halophila (strain DSM 244 / SL1)).